We begin with the raw amino-acid sequence, 184 residues long: Ribosome-recycling factor (184 aa).

Residues 133 to 162 (RDGMDNLKQDENKKEISEDERKRHETEVQK) show a composition bias toward basic and acidic residues. The segment at 133–163 (RDGMDNLKQDENKKEISEDERKRHETEVQKL) is disordered.

Belongs to the RRF family.

The protein localises to the cytoplasm. Functionally, responsible for the release of ribosomes from messenger RNA at the termination of protein biosynthesis. May increase the efficiency of translation by recycling ribosomes from one round of translation to another. This Sphingopyxis alaskensis (strain DSM 13593 / LMG 18877 / RB2256) (Sphingomonas alaskensis) protein is Ribosome-recycling factor.